Reading from the N-terminus, the 89-residue chain is Small ribosomal subunit protein uS15 (89 aa).

The protein belongs to the universal ribosomal protein uS15 family. In terms of assembly, part of the 30S ribosomal subunit. Forms a bridge to the 50S subunit in the 70S ribosome, contacting the 23S rRNA.

Its function is as follows. One of the primary rRNA binding proteins, it binds directly to 16S rRNA where it helps nucleate assembly of the platform of the 30S subunit by binding and bridging several RNA helices of the 16S rRNA. Forms an intersubunit bridge (bridge B4) with the 23S rRNA of the 50S subunit in the ribosome. This is Small ribosomal subunit protein uS15 from Desulfosudis oleivorans (strain DSM 6200 / JCM 39069 / Hxd3) (Desulfococcus oleovorans).